A 170-amino-acid polypeptide reads, in one-letter code: Shikimate kinase (170 aa).

15-20 (GAGKTT) contacts ATP. Thr19 serves as a coordination point for Mg(2+). Residues Asp37, Arg61, and Gly83 each coordinate substrate. An ATP-binding site is contributed by Arg121. Residue Arg140 coordinates substrate.

This sequence belongs to the shikimate kinase family. As to quaternary structure, monomer. Requires Mg(2+) as cofactor.

It localises to the cytoplasm. It catalyses the reaction shikimate + ATP = 3-phosphoshikimate + ADP + H(+). The protein operates within metabolic intermediate biosynthesis; chorismate biosynthesis; chorismate from D-erythrose 4-phosphate and phosphoenolpyruvate: step 5/7. Catalyzes the specific phosphorylation of the 3-hydroxyl group of shikimic acid using ATP as a cosubstrate. This is Shikimate kinase from Neisseria gonorrhoeae (strain ATCC 700825 / FA 1090).